The sequence spans 56 residues: uncharacterized protein (56 aa).

This is an uncharacterized protein from Borreliella burgdorferi (strain ATCC 35210 / DSM 4680 / CIP 102532 / B31) (Borrelia burgdorferi).